The sequence spans 1240 residues: Structural polyprotein (1240 aa).

The interval 1–35 is necessary for nucleocapsid assembly and virus assembly; it reads MFPYPTLNYPPMAPINPMAYRDPNPPRQVAPFRPP. Positions 1–102 are disordered; it reads MFPYPTLNYP…RKPKPGKRQR (102 aa). The span at 23–34 shows a compositional bias: pro residues; that stretch reads PNPPRQVAPFRP. Residues 36-69 form a host transcription inhibition region; it reads LAAQIEDLRRSIANLTLKQRAPNPPAGPPAKRKK. The Supraphysiological nuclear export signal motif lies at 43–50; the sequence is LRRSIANL. Residue Asn49 is glycosylated (N-linked (GlcNAc...) asparagine; by host). Over residues 65 to 102 the composition is skewed to basic residues; that stretch reads AKRKKPAPKPKPAQAKKKRPPPPAKKQKRKPKPGKRQR. Positions 66–70 match the Nuclear localization signal motif; the sequence is KRKKP. Residues 82-112 form a binding to the viral RNA region; the sequence is KRPPPPAKKQKRKPKPGKRQRMCMKLESDKT. The ribosome-binding stretch occupies residues 97–111; the sequence is PGKRQRMCMKLESDK. Phosphoserine is present on Ser109. Positions 111 to 260 constitute a Peptidase S3 domain; it reads KTFPIMLNGQ…KDTPEGSEPW (150 aa). Phosphothreonine is present on Thr112. Catalysis depends on charge relay system residues His137, Asp159, and Ser211. The interval 261–272 is functions as an uncleaved signal peptide for the precursor of protein E3/E2; it reads SLATVMCVLANI. The Extracellular portion of the chain corresponds to 261–682; it reads SLATVMCVLA…HEVVVYYYNR (422 aa). 2 N-linked (GlcNAc...) asparagine; by host glycosylation sites follow: Asn271 and Asn638. Residues 683–703 traverse the membrane as a helical segment; the sequence is YPLTTIIGLCTCVAIIMVSCV. The Cytoplasmic segment spans residues 704–743; it reads HPCGSFAGLRNLCITPYKLAPNAQVPILLALLCCIKPTRA. 4 S-palmitoyl cysteine; by host lipidation sites follow: Cys706, Cys716, Cys736, and Cys737. A transient transmembrane before p62-6K protein processing region spans residues 715–735; the sequence is LCITPYKLAPNAQVPILLALL. Topologically, residues 744 to 758 are extracellular; that stretch reads DDTLQVLNYLWNNNQ. Residues 759 to 779 traverse the membrane as a helical segment; the sequence is NFFWMQTLIPLAALIVCMRIV. Arg780 is a topological domain (cytoplasmic). Residues 781–801 traverse the membrane as a helical segment; it reads CLFCCGPAFLLVCGAWAAAYE. The Extracellular portion of the chain corresponds to 802-1216; sequence HTAVMPNKVG…WSWLKVLVGG (415 aa). Asn834 carries N-linked (GlcNAc...) asparagine; by host glycosylation. 4 disulfides stabilise this stretch: Cys848/Cys913, Cys861/Cys893, Cys862/Cys895, and Cys867/Cys877. The segment at 883-900 is E1 fusion peptide loop; that stretch reads VYPFMWGGAYCFCDTENT. A glycan (N-linked (GlcNAc...) asparagine; by host) is linked at Asn933. 3 disulfides stabilise this stretch: Cys1059–Cys1071, Cys1101–Cys1176, and Cys1106–Cys1180. Residues 1217 to 1237 traverse the membrane as a helical segment; it reads TSAFIVLGLIATAVVALVLFF. Topologically, residues 1238-1240 are cytoplasmic; that stretch reads HRH.

In terms of assembly, part of a tetrameric complex composed of host CRM1, host importin alpha/beta dimer and the viral capsid; this complex blocks the receptor-mediated transport through the nuclear pore. Interacts with host phosphatase PPP1CA; this interaction dephosphorylates the capsid protein, which increases its ability to bind to the viral genome. Interacts with host karyopherin KPNA4; this interaction allows the nuclear import of the viral capsid protein. Interacts with spike glycoprotein E2. Interacts with host IRAK1; the interaction leads to inhibition of IRAK1-dependent signaling. The precursor of protein E3/E2 and E1 form a heterodimer shortly after synthesis. As to quaternary structure, the precursor of protein E3/E2 and E1 form a heterodimer shortly after synthesis. Processing of the precursor of protein E3/E2 into E2 and E3 results in a heterodimer of the spike glycoproteins E2 and E1. Spike at virion surface are constituted of three E2-E1 heterodimers. After target cell attachment and endocytosis, E1 change conformation to form homotrimers. Interacts with 6K protein. In terms of assembly, processing of the precursor of protein E3/E2 into E2 and E3 results in a heterodimer of the spike glycoproteins E2 and E1. Spike at virion surface are constituted of three E2-E1 heterodimers. Interacts with 6K protein. Interacts with spike glycoprotein E1. Interacts with spike glycoprotein E2. Structural polyprotein: Specific enzymatic cleavages in vivo yield mature proteins. Capsid protein is auto-cleaved during polyprotein translation, unmasking a signal peptide at the N-terminus of the precursor of E3/E2. The remaining polyprotein is then targeted to the host endoplasmic reticulum, where host signal peptidase cleaves it into pE2, 6K and E1 proteins. pE2 is further processed to mature E3 and E2 by host furin in trans-Golgi vesicle. Post-translationally, phosphorylated on serine and threonine residues. In terms of processing, palmitoylated via thioester bonds. These palmitoylations may induce disruption of the C-terminus transmembrane. This would result in the reorientation of E2 C-terminus from lumenal to cytoplasmic side. N-glycosylated. Post-translationally, palmitoylated via thioester bonds.

It localises to the virion. Its subcellular location is the host cytoplasm. The protein resides in the host cell membrane. It is found in the host nucleus. The protein localises to the virion membrane. It carries out the reaction Autocatalytic release of the core protein from the N-terminus of the togavirus structural polyprotein by hydrolysis of a -Trp-|-Ser- bond.. In terms of biological role, forms an icosahedral capsid with a T=4 symmetry composed of 240 copies of the capsid protein surrounded by a lipid membrane through which penetrate 80 spikes composed of trimers of E1-E2 heterodimers. The capsid protein binds to the viral RNA genome at a site adjacent to a ribosome binding site for viral genome translation following genome release. Possesses a protease activity that results in its autocatalytic cleavage from the nascent structural protein. Following its self-cleavage, the capsid protein transiently associates with ribosomes, and within several minutes the protein binds to viral RNA and rapidly assembles into icosahedric core particles. The resulting nucleocapsid eventually associates with the cytoplasmic domain of the spike glycoprotein E2 at the cell membrane, leading to budding and formation of mature virions. In case of infection, new virions attach to target cells and after clathrin-mediated endocytosis their membrane fuses with the host endosomal membrane. This leads to the release of the nucleocapsid into the cytoplasm, followed by an uncoating event necessary for the genomic RNA to become accessible. The uncoating might be triggered by the interaction of capsid proteins with ribosomes. Binding of ribosomes would release the genomic RNA since the same region is genomic RNA-binding and ribosome-binding. Specifically inhibits interleukin-1 receptor-associated kinase 1/IRAK1-dependent signaling during viral entry, representing a means by which the alphaviruses may evade innate immune detection and activation prior to viral gene expression. Inhibits host transcription. Forms a tetrameric complex with XPO1/CRM1 and the nuclear import receptor importin. This complex blocks the central channel of host nuclear pores thereby inhibiting the receptor-mediated nuclear transport and thus the host mRNA and rRNA transcription. The inhibition of transcription is linked to a cytopathic effect on the host cell. Functionally, provides the signal sequence for the translocation of the precursor of protein E3/E2 to the host endoplasmic reticulum. Furin-cleaved E3 remains associated with spike glycoprotein E1 and mediates pH protection of the latter during the transport via the secretory pathway. After virion release from the host cell, the assembly protein E3 is gradually released in the extracellular space. Plays a role in viral attachment to target host cell, by binding to the cell receptor. Synthesized as a p62 precursor which is processed by furin at the cell membrane just before virion budding, giving rise to E2-E1 heterodimer. The p62-E1 heterodimer is stable, whereas E2-E1 is unstable and dissociate at low pH. p62 is processed at the last step, presumably to avoid E1 fusion activation before its final export to cell surface. E2 C-terminus contains a transitory transmembrane that would be disrupted by palmitoylation, resulting in reorientation of the C-terminal tail from lumenal to cytoplasmic side. This step is critical since E2 C-terminus is involved in budding by interacting with capsid proteins. This release of E2 C-terminus in cytoplasm occurs lately in protein export, and precludes premature assembly of particles at the endoplasmic reticulum membrane. Its function is as follows. Constitutive membrane protein involved in virus glycoprotein processing, cell permeabilization, and the budding of viral particles. Disrupts the calcium homeostasis of the cell, probably at the endoplasmic reticulum level. This leads to cytoplasmic calcium elevation. Because of its lipophilic properties, the 6K protein is postulated to influence the selection of lipids that interact with the transmembrane domains of the glycoproteins, which, in turn, affects the deformability of the bilayer required for the extreme curvature that occurs as budding proceeds. Present in low amount in virions, about 3% compared to viral glycoproteins. In terms of biological role, class II viral fusion protein. Fusion activity is inactive as long as E1 is bound to E2 in mature virion. After virus attachment to target cell and endocytosis, acidification of the endosome would induce dissociation of E1/E2 heterodimer and concomitant trimerization of the E1 subunits. This E1 trimer is fusion active, and promotes release of viral nucleocapsid in cytoplasm after endosome and viral membrane fusion. Efficient fusion requires the presence of cholesterol and sphingolipid in the target membrane. Fusion is optimal at levels of about 1 molecule of cholesterol per 2 molecules of phospholipids, and is specific for sterols containing a 3-beta-hydroxyl group. This chain is Structural polyprotein, found in Eastern equine encephalitis virus (strain va33[ten broeck]) (EEEV).